Reading from the N-terminus, the 241-residue chain is uncharacterized protein (241 aa).

Positions 19 to 53 (KRIGYGMGEKSSAGSSRDQTYSVKPASDVKDKKKV) are disordered. A compositionally biased stretch (polar residues) spans 30-39 (SAGSSRDQTY).

This is an uncharacterized protein from Ostreid herpesvirus 1 (isolate France) (OsHV-1).